The chain runs to 476 residues: Cytochrome P450 monooxygenase ppzE (476 aa).

A heme-binding site is contributed by Cys-452.

It belongs to the cytochrome P450 family. Heme is required as a cofactor.

It participates in secondary metabolite biosynthesis. Its function is as follows. Cytochrome P450 monooxygenase; part of the gene cluster that mediates the biosynthesis of pyrrolopyrazines, secondary metabolites showing insecticidal activity. The role of ppzE within the pathway has still to be determined. The single multifunctional NRPS ppzA is sufficient to produce peramine via condensation of 1-pyrroline-5-carboxylate and arginine, N-methylation of the alpha-amino group of arginine and reduction of the thioester and the cyclization to form an iminium ion resulting in release from the peptide synthetase. Deprotonation of this intermediate and oxidation of the pyrroline ring would give rise to peramine. In Epichloe species that produce only peramine, the peramine synthetase gene is not localized in a gene cluster, in contrast to Metarhizium species that contain additional pyrrolopyrazine biosynthesis genes. The 2-oxoglutarate-Fe(II) type oxidoreductase ppzC hydroxylates peramine to yield the newly identified compound 8-hydroxyperamine whereas ppzD converts L-proline into trans-4-hydroxy-L-proline, a precursor of peramine biosynthesis. This chain is Cytochrome P450 monooxygenase ppzE, found in Metarhizium majus (strain ARSEF 297).